Consider the following 240-residue polypeptide: Uridylate kinase (240 aa).

13–16 serves as a coordination point for ATP; that stretch reads KLSG. Residues 21-26 are involved in allosteric activation by GTP; the sequence is GEQGYG. G55 lines the UMP pocket. ATP is bound by residues G56 and R60. Residues D75 and 137-144 contribute to the UMP site; that span reads TGNPFFST. 3 residues coordinate ATP: T164, Y170, and D173.

This sequence belongs to the UMP kinase family. Homohexamer.

Its subcellular location is the cytoplasm. The catalysed reaction is UMP + ATP = UDP + ADP. It participates in pyrimidine metabolism; CTP biosynthesis via de novo pathway; UDP from UMP (UMPK route): step 1/1. Its activity is regulated as follows. Allosterically activated by GTP. Inhibited by UTP. Its function is as follows. Catalyzes the reversible phosphorylation of UMP to UDP. In Aquifex aeolicus (strain VF5), this protein is Uridylate kinase.